A 170-amino-acid polypeptide reads, in one-letter code: Ribosome maturation factor RimM (170 aa).

The 73-residue stretch at 98–170 (PDEYYWVDLE…LIVVDWDPDF (73 aa)) folds into the PRC barrel domain.

Belongs to the RimM family. As to quaternary structure, binds ribosomal protein uS19.

It is found in the cytoplasm. Its function is as follows. An accessory protein needed during the final step in the assembly of 30S ribosomal subunit, possibly for assembly of the head region. Essential for efficient processing of 16S rRNA. May be needed both before and after RbfA during the maturation of 16S rRNA. It has affinity for free ribosomal 30S subunits but not for 70S ribosomes. This Xanthomonas oryzae pv. oryzae (strain MAFF 311018) protein is Ribosome maturation factor RimM.